Here is a 303-residue protein sequence, read N- to C-terminus: Probable 5-dehydro-4-deoxyglucarate dehydratase (303 aa).

The protein belongs to the DapA family.

The enzyme catalyses 5-dehydro-4-deoxy-D-glucarate + H(+) = 2,5-dioxopentanoate + CO2 + H2O. The protein operates within carbohydrate acid metabolism; D-glucarate degradation; 2,5-dioxopentanoate from D-glucarate: step 2/2. This chain is Probable 5-dehydro-4-deoxyglucarate dehydratase, found in Leptothrix cholodnii (strain ATCC 51168 / LMG 8142 / SP-6) (Leptothrix discophora (strain SP-6)).